Consider the following 313-residue polypeptide: Non-functional target of rapamycin complex subunit LST8-2 (313 aa).

WD repeat units follow at residues 1-35, 38-76, 82-121, 123-162, 166-205, 215-255, and 258-297; these read MFENKPDDSPVYLATASHDQTIRLWQARTGRCYFS, YPDLHVNRLELTPEKGKLVAACNPHIRLFDLRSYNPHIP, SHTKNVMAVGFQYTGHMMYSGSEDGSVKIWDLRVRECQRE, RSVSPVNTVVLHPNQTELISGDQNGNIRVWDLRADLCSCE, EVGTPIRSLTVMWDGTMVVAANDRGTCYVWRSLCERQTMT, AHNS…LEKV, and GHERWVWDCDFSMDGEYLVTASSDTTARLWSMRAGKEEMV.

Belongs to the WD repeat LST8 family.

Its function is as follows. Probable non-functional protein. The sequence is that of Non-functional target of rapamycin complex subunit LST8-2 from Arabidopsis thaliana (Mouse-ear cress).